The primary structure comprises 176 residues: Protein CURLY FLAG LEAF 2 (176 aa).

The EAR motif lies at 41 to 46 (FLELSS). The WW domain maps to 48-82 (FSVPSHLEQCLDLKTGEIYYRSWNSGMRVKEDPRK). 2 disordered regions span residues 77-106 (KEDPRKSMSRGNYADQSSGESSGTVFSSEE) and 111-130 (YESEESSSESSPSSRKYHKE). The span at 93–106 (SSGESSGTVFSSEE) shows a compositional bias: low complexity.

May interact with BHLH122/CFLAP1 and BHLH80/CFLAP2.

In terms of biological role, may negatively regulate the cuticle development by interacting with the HD-ZIP IV transcription factor HDG1. This is Protein CURLY FLAG LEAF 2 from Arabidopsis thaliana (Mouse-ear cress).